The following is a 262-amino-acid chain: Small ribosomal subunit protein uS2 (262 aa).

Belongs to the universal ribosomal protein uS2 family.

The protein is Small ribosomal subunit protein uS2 of Borreliella afzelii (strain PKo) (Borrelia afzelii).